The chain runs to 424 residues: Formyl-CoA:oxalate CoA-transferase (424 aa).

CoA contacts are provided by residues 17–18 (QS), R38, 96–98 (NFA), R104, and 136–139 (KVYE). The Nucleophile role is filled by D168. 247–249 (GGQ) contributes to the substrate binding site.

It belongs to the CoA-transferase III family. Frc subfamily. As to quaternary structure, homodimer.

It carries out the reaction formyl-CoA + oxalate = oxalyl-CoA + formate. Its pathway is metabolic intermediate degradation; oxalate degradation; CO(2) and formate from oxalate: step 1/2. In terms of biological role, involved in the catabolism of oxalate and in the adapatation to low pH via the induction of the oxalate-dependent acid tolerance response (ATR). Catalyzes the transfer of the CoA moiety from formyl-CoA to oxalate. The protein is Formyl-CoA:oxalate CoA-transferase of Afipia carboxidovorans (strain ATCC 49405 / DSM 1227 / KCTC 32145 / OM5) (Oligotropha carboxidovorans).